A 166-amino-acid chain; its full sequence is Lipoprotein signal peptidase (166 aa).

The next 4 helical transmembrane spans lie at Gly10–Thr30, Leu46–Ala66, Trp71–Leu91, and Phe100–Ile120. Active-site residues include Asp126 and Asp144. The helical transmembrane segment at Trp135–Ile155 threads the bilayer.

Belongs to the peptidase A8 family.

It localises to the cell inner membrane. The catalysed reaction is Release of signal peptides from bacterial membrane prolipoproteins. Hydrolyzes -Xaa-Yaa-Zaa-|-(S,diacylglyceryl)Cys-, in which Xaa is hydrophobic (preferably Leu), and Yaa (Ala or Ser) and Zaa (Gly or Ala) have small, neutral side chains.. It participates in protein modification; lipoprotein biosynthesis (signal peptide cleavage). Functionally, this protein specifically catalyzes the removal of signal peptides from prolipoproteins. This chain is Lipoprotein signal peptidase, found in Burkholderia thailandensis (strain ATCC 700388 / DSM 13276 / CCUG 48851 / CIP 106301 / E264).